The primary structure comprises 436 residues: UDP-N-acetylmuramate--L-alanine ligase (436 aa).

111 to 117 (GTHGKTS) lines the ATP pocket.

The protein belongs to the MurCDEF family.

Its subcellular location is the cytoplasm. It carries out the reaction UDP-N-acetyl-alpha-D-muramate + L-alanine + ATP = UDP-N-acetyl-alpha-D-muramoyl-L-alanine + ADP + phosphate + H(+). The protein operates within cell wall biogenesis; peptidoglycan biosynthesis. Functionally, cell wall formation. The sequence is that of UDP-N-acetylmuramate--L-alanine ligase from Lactiplantibacillus plantarum (strain ATCC BAA-793 / NCIMB 8826 / WCFS1) (Lactobacillus plantarum).